The following is a 257-amino-acid chain: Probable branched-chain amino acid transport ATP-binding protein LivG (257 aa).

The ABC transporter domain maps to 8–253 (LRTENIVKYF…VLSDPKVVEI (246 aa)). 40–47 (GPNGSGKS) is a binding site for ATP.

The protein belongs to the ABC transporter superfamily. As to quaternary structure, monomer.

Probable component of a branched-chain amino-acid transport system. The chain is Probable branched-chain amino acid transport ATP-binding protein LivG (livG) from Methanocaldococcus jannaschii (strain ATCC 43067 / DSM 2661 / JAL-1 / JCM 10045 / NBRC 100440) (Methanococcus jannaschii).